The chain runs to 390 residues: F-box/kelch-repeat protein At4g39753 (390 aa).

Low complexity predominate over residues 1–16; that stretch reads MVTFWAETAASAATTS. Residues 1 to 33 form a disordered region; it reads MVTFWAETAASAATTSKGEPPSKKRKTNPSPPP. Residues 32-79 enclose the F-box domain; sequence PPSLLSLPDVLILNCLSRIPKSYYPKLSIVSKTFRDLIISIDLNHARF. Kelch repeat units lie at residues 139-192, 193-243, 245-286, and 288-321; these read PLLV…VFDR, KIYV…MIQG, FYVR…WYSC, and PNSFLWFDNEIKNWRLIKGLSSLNHSCRSGLIET.

This is F-box/kelch-repeat protein At4g39753 from Arabidopsis thaliana (Mouse-ear cress).